The chain runs to 81 residues: Protein RALF-like 6 (81 aa).

The first 29 residues, 1-29, serve as a signal peptide directing secretion; sequence MAAHKKSHIRIFFVSVMIILSLFSGFGEG. 2 cysteine pairs are disulfide-bonded: Cys-46-Cys-54 and Cys-66-Cys-72.

The protein belongs to the plant rapid alkalinization factor (RALF) family.

It is found in the secreted. In terms of biological role, cell signaling peptide that may regulate plant stress, growth, and development. Mediates a rapid alkalinization of extracellular space by mediating a transient increase in the cytoplasmic Ca(2+) concentration leading to a calcium-dependent signaling events through a cell surface receptor and a concomitant activation of some intracellular mitogen-activated protein kinases. In Arabidopsis thaliana (Mouse-ear cress), this protein is Protein RALF-like 6 (RALFL6).